The following is a 1034-amino-acid chain: Glycine dehydrogenase (decarboxylating), mitochondrial (1034 aa).

The N-terminal 63 residues, 1 to 63 (MERARRLAML…LNGFGSQVRT (63 aa)), are a transit peptide targeting the mitochondrion. At Lys770 the chain carries N6-(pyridoxal phosphate)lysine.

The protein belongs to the GcvP family. As to quaternary structure, homodimer. The glycine cleavage system is composed of four proteins: P, T, L and H. Pyridoxal 5'-phosphate serves as cofactor.

The protein localises to the mitochondrion. It carries out the reaction N(6)-[(R)-lipoyl]-L-lysyl-[glycine-cleavage complex H protein] + glycine + H(+) = N(6)-[(R)-S(8)-aminomethyldihydrolipoyl]-L-lysyl-[glycine-cleavage complex H protein] + CO2. The glycine cleavage system catalyzes the degradation of glycine. The P protein binds the alpha-amino group of glycine through its pyridoxal phosphate cofactor; CO(2) is released and the remaining methylamine moiety is then transferred to the lipoamide cofactor of the H protein. The sequence is that of Glycine dehydrogenase (decarboxylating), mitochondrial (GDCSP) from Flaveria anomala (Yellowtops).